Here is a 138-residue protein sequence, read N- to C-terminus: Basic phospholipase A2 beta-bungarotoxin A-AL3 chain (138 aa).

Positions 1–10 (LAVCVSLIGA) are cleaved as a signal peptide. Positions 11-18 (ANIPPQHL) are excised as a propeptide. Intrachain disulfides connect Cys-45-Cys-137, Cys-47-Cys-63, Cys-62-Cys-118, Cys-69-Cys-111, Cys-79-Cys-104, and Cys-97-Cys-109. Positions 46, 48, and 50 each coordinate Ca(2+). His-66 is an active-site residue. A Ca(2+)-binding site is contributed by Asp-67. Asp-112 is a catalytic residue.

It belongs to the phospholipase A2 family. Group I subfamily. D49 sub-subfamily. Heterodimer; disulfide-linked. The A chains have phospholipase A2 activity and the B chains show homology with the basic protease inhibitors. Ca(2+) serves as cofactor. As to expression, expressed by the venom gland.

The protein resides in the secreted. It carries out the reaction a 1,2-diacyl-sn-glycero-3-phosphocholine + H2O = a 1-acyl-sn-glycero-3-phosphocholine + a fatty acid + H(+). In terms of biological role, snake venom phospholipase A2 (PLA2) that inhibits neuromuscular transmission by blocking acetylcholine release from the nerve termini. PLA2 catalyzes the calcium-dependent hydrolysis of the 2-acyl groups in 3-sn-phosphoglycerides. The polypeptide is Basic phospholipase A2 beta-bungarotoxin A-AL3 chain (Bungarus multicinctus (Many-banded krait)).